The following is a 203-amino-acid chain: Pacifastin-like protease inhibitor cvp4 (203 aa).

The first 19 residues, methionine 1–alanine 19, serve as a signal peptide directing secretion. Pacifastin domains follow at residues proline 23–asparagine 59, aspartate 85–asparagine 121, and aspartate 147–tyrosine 184. Disulfide bonds link cysteine 26–cysteine 41, cysteine 36–cysteine 56, cysteine 39–cysteine 51, cysteine 88–cysteine 103, cysteine 98–cysteine 118, and cysteine 101–cysteine 113. The span at arginine 129–glutamate 148 shows a compositional bias: basic and acidic residues. Positions arginine 129–cysteine 150 are disordered. 3 disulfide bridges follow: cysteine 150–cysteine 165, cysteine 160–cysteine 181, and cysteine 163–cysteine 176.

Belongs to the protease inhibitor I19 family. Expressed by the venom gland.

It is found in the secreted. Its function is as follows. Inhibits trypsin activity and prophenoloxidase (PPO) activation, an enzyme essential for both clotting and insect innate immune responses. It does not inhibit activity of chymotrypsin and protease K, and has no effect on phenoloxidase (PO) activity. This Pimpla hypochondriaca (Parasitoid wasp) protein is Pacifastin-like protease inhibitor cvp4.